A 706-amino-acid polypeptide reads, in one-letter code: Putative pentatricopeptide repeat-containing protein At3g47840 (706 aa).

PPR repeat units lie at residues 39–69, 70–104, 107–141, 142–172, 173–203, 208–242, 243–273, 274–308, 309–343, 344–374, 375–409, 410–444, 445–475, 476–510, 511–541, and 547–577; these read VKFD…MPHG, DIVS…DHAV, DTSV…SLLS, SVYV…MPFR, NAVT…MSRS, DTYT…GFVT, TLCV…MSER, DVVS…QVPP, NEQT…GLND, SLSV…MRCR, DIIS…GTKP, TDFA…GLEQ, NSTV…TDRD, DIVS…GFRP, DSVT…MQET, and AKEH…MSWK. Residues 582–657 are type E motif; it reads VWTTLLIACK…EPGWSSIKIK (76 aa). Residues 658–688 are type E(+) motif; the sequence is DCVSAFVSGDRFHPQSEDIYNILELAVSGAE.

This sequence belongs to the PPR family. PCMP-E subfamily.

This chain is Putative pentatricopeptide repeat-containing protein At3g47840 (PCMP-E43), found in Arabidopsis thaliana (Mouse-ear cress).